The following is a 277-amino-acid chain: Uridine-cytidine kinase 1 (277 aa).

24-32 (GGTASGKST) provides a ligand contact to ATP. Positions 81, 109, 114, 163, 172, and 180 each coordinate substrate. Asp209 serves as a coordination point for ATP. The disordered stretch occupies residues 241 to 277 (NHGRSLKRGVAEHGENPSGSSSNLTKRPLLEPSTRPH).

The protein belongs to the uridine kinase family.

The enzyme catalyses uridine + ATP = UMP + ADP + H(+). It catalyses the reaction cytidine + ATP = CMP + ADP + H(+). Its pathway is pyrimidine metabolism; CTP biosynthesis via salvage pathway; CTP from cytidine: step 1/3. It functions in the pathway pyrimidine metabolism; UMP biosynthesis via salvage pathway; UMP from uridine: step 1/1. Phosphorylates uridine and cytidine to uridine monophosphate and cytidine monophosphate. Does not phosphorylate deoxyribonucleosides or purine ribonucleosides. Can use ATP or GTP as a phosphate donor. The polypeptide is Uridine-cytidine kinase 1 (uck1) (Danio rerio (Zebrafish)).